A 497-amino-acid polypeptide reads, in one-letter code: 4,4'-diaponeurosporene oxygenase (497 aa).

An FAD-binding site is contributed by 7–19 (VIGGGLGGISAAI).

The protein belongs to the carotenoid/retinoid oxidoreductase family. CrtP subfamily. Requires FAD as cofactor.

It catalyses the reaction all-trans-4,4'-diaponeurosporene + 2 AH2 + 2 O2 = 4,4'-diaponeurosporenal + 2 A + 3 H2O. The protein operates within carotenoid biosynthesis; staphyloxanthin biosynthesis; staphyloxanthin from farnesyl diphosphate: step 3/5. Involved in the biosynthesis of the yellow-orange carotenoid staphyloxanthin, which plays a role in the virulence via its protective function against oxidative stress. Catalyzes the oxidation of the terminal methyl side group of 4,4'-diaponeurosporene to form 4,4'-diaponeurosporen-4-al. The sequence is that of 4,4'-diaponeurosporene oxygenase from Staphylococcus aureus (strain bovine RF122 / ET3-1).